The primary structure comprises 340 residues: Biotin synthase (340 aa).

The 228-residue stretch at 53–280 (SAIQLSSLLS…LARVRLSAGR (228 aa)) folds into the Radical SAM core domain. Residues Cys-68, Cys-72, and Cys-75 each coordinate [4Fe-4S] cluster. [2Fe-2S] cluster contacts are provided by Cys-112, Cys-143, Cys-203, and Arg-275.

Belongs to the radical SAM superfamily. Biotin synthase family. Homodimer. Requires [4Fe-4S] cluster as cofactor. [2Fe-2S] cluster serves as cofactor.

It catalyses the reaction (4R,5S)-dethiobiotin + (sulfur carrier)-SH + 2 reduced [2Fe-2S]-[ferredoxin] + 2 S-adenosyl-L-methionine = (sulfur carrier)-H + biotin + 2 5'-deoxyadenosine + 2 L-methionine + 2 oxidized [2Fe-2S]-[ferredoxin]. The protein operates within cofactor biosynthesis; biotin biosynthesis; biotin from 7,8-diaminononanoate: step 2/2. In terms of biological role, catalyzes the conversion of dethiobiotin (DTB) to biotin by the insertion of a sulfur atom into dethiobiotin via a radical-based mechanism. This is Biotin synthase from Bordetella petrii (strain ATCC BAA-461 / DSM 12804 / CCUG 43448).